The primary structure comprises 344 residues: UDP-galactose/UDP-glucose transporter 5B (344 aa).

8 helical membrane-spanning segments follow: residues 16–36, 56–76, 115–135, 142–162, 176–196, 220–240, 246–266, and 292–312; these read LWKG…YGVL, LFLV…ALLA, VQTL…TLIM, FDYL…LFPA, TVWG…TSTF, CVLS…VDFV, CLLD…FISY, and CIWF…IVFG. Residues 324–344 form a disordered region; that stretch reads KNSQTQPPPPELPQYEKVESS.

This sequence belongs to the nucleotide-sugar transporter family. UDP-galactose:UMP antiporter (TC 2.A.7.11) subfamily.

The protein localises to the membrane. Its function is as follows. Sugar transporter involved in the transport of nucleotide-sugars from cytoplasm into the Golgi and/or the endoplasmic reticulum. In Arabidopsis thaliana (Mouse-ear cress), this protein is UDP-galactose/UDP-glucose transporter 5B.